A 2844-amino-acid chain; its full sequence is Sodium channel protein 60E (2844 aa).

The Cytoplasmic segment spans residues Met1–Tyr121. An I repeat occupies Phe107–Lys434. The helical transmembrane segment at Ile122 to Met145 threads the bilayer. Residues Thr146–Glu151 are Extracellular-facing. The helical transmembrane segment at Ala152–Gly172 threads the bilayer. At Phe173–Asn183 the chain is on the cytoplasmic side. A helical transmembrane segment spans residues Pro184–Met202. Residues Glu203 to Ala208 are Extracellular-facing. The helical; Voltage-sensor transmembrane segment at Gly209 to Leu228 threads the bilayer. The Cytoplasmic portion of the chain corresponds to Lys229 to Glu244. A helical transmembrane segment spans residues Val245 to Met265. The Extracellular portion of the chain corresponds to Gly266–Asn340. A disulfide bridge links Cys272 with Cys318. N-linked (GlcNAc...) asparagine glycans are attached at residues Asn282, Asn293, and Asn311. The pore-forming intramembrane region spans Phe341–Leu365. Residues Ala366–Ser374 are Extracellular-facing. Residues Phe375–Val395 form a helical membrane-spanning segment. Residues Ala396 to Asp687 lie on the Cytoplasmic side of the membrane. The tract at residues Ala452–Val610 is disordered. Residues Ser455–Lys465 are compositionally biased toward basic residues. Residues Glu469–Ser479 show a composition bias toward gly residues. Low complexity-rich tracts occupy residues Gln511–Glu520 and Ser577–Glu586. Residues Gly593–Thr603 are compositionally biased toward acidic residues. Residues Cys668–Asn1130 form an II repeat. The chain crosses the membrane as a helical span at residues Pro688–Glu708. The Extracellular portion of the chain corresponds to His709–Asn718. The helical transmembrane segment at Ala719–Ser743 threads the bilayer. Residues Lys744–Cys749 lie on the Cytoplasmic side of the membrane. Residues Gly750–Glu769 form a helical membrane-spanning segment. Over Leu770 to Ser775 the chain is Extracellular. Residues Val776–Met795 form a helical; Voltage-sensor membrane-spanning segment. Residues Lys796–Gly810 are Cytoplasmic-facing. Residues Asn811–Ser832 form a helical membrane-spanning segment. The Extracellular segment spans residues Lys833–Asp852. An intramembrane region (pore-forming) is located at residues Phe853–Trp873. The Extracellular portion of the chain corresponds to Asp874–Ala889. Residues Cys875 and Cys887 are joined by a disulfide bond. The chain crosses the membrane as a helical span at residues Ile890–Leu910. Over Leu911–Thr1742 the chain is Cytoplasmic. Residues Tyr1129–Asn1157 show a composition bias toward polar residues. Disordered regions lie at residues Tyr1129–Glu1166, Tyr1185–Ser1224, Ile1268–Thr1288, Ala1577–Ser1630, and Leu1635–Lys1654. The segment covering Arg1191–Leu1203 has biased composition (low complexity). Basic and acidic residues predominate over residues Leu1204–Arg1213. 3 stretches are compositionally biased toward polar residues: residues Pro1277–Asn1286, Pro1604–Arg1618, and Lys1640–Lys1654. The III repeat unit spans residues Pro1723–Lys2040. Residues Ala1743–Ala1763 form a helical membrane-spanning segment. Residues Ser1764 to Asn1789 are Extracellular-facing. N-linked (GlcNAc...) asparagine glycosylation is found at Asn1778 and Asn1789. A helical membrane pass occupies residues Phe1790 to Ser1810. The Cytoplasmic segment spans residues Lys1811–Phe1813. A helical membrane pass occupies residues Thr1814–Ile1834. Residues Glu1835–Asn1839 are Extracellular-facing. A helical; Voltage-sensor transmembrane segment spans residues Leu1840–Trp1861. The Cytoplasmic portion of the chain corresponds to Gln1862 to Asn1880. A helical transmembrane segment spans residues Val1881 to Gly1902. Topologically, residues Lys1903 to Val1943 are extracellular. A glycan (N-linked (GlcNAc...) asparagine) is linked at Asn1930. The pore-forming intramembrane region spans Gly1944–Asp1965. Residues Ala1966–Asn1981 lie on the Extracellular side of the membrane. A helical transmembrane segment spans residues Leu1982 to Leu2002. The Cytoplasmic portion of the chain corresponds to Phe2003–Arg2069. An IV repeat occupies Ile2050–Asn2311. A helical transmembrane segment spans residues Phe2070–Tyr2090. Over Asp2091–Ala2095 the chain is Extracellular. Residues Val2096–Ile2116 form a helical membrane-spanning segment. The Cytoplasmic portion of the chain corresponds to Val2117–Asn2132. The chain crosses the membrane as a helical span at residues Val2133 to Ile2153. Over Asp2154–Leu2162 the chain is Extracellular. The chain crosses the membrane as a helical; Voltage-sensor span at residues Arg2163–Arg2184. The Cytoplasmic segment spans residues Lys2185–Asn2199. A helical transmembrane segment spans residues Ile2200–Gly2220. Over Asn2221 to Thr2236 the chain is Extracellular. An intramembrane region (pore-forming) is located at residues Phe2237–Ser2259. Residues Leu2260 to Tyr2288 are Extracellular-facing. A helical membrane pass occupies residues Phe2289–Leu2309. The Cytoplasmic portion of the chain corresponds to Glu2310–Arg2844. An IQ domain is found at Gln2441–Ser2470. Disordered regions lie at residues Arg2457–Gly2479, Ser2584–Gln2668, Asp2780–Ile2802, and Asn2818–Arg2844. Over residues Ser2467–Gly2479 the composition is skewed to polar residues. Residues Ala2595 to Ser2632 show a composition bias toward low complexity. Positions Ser2647–Lys2658 are enriched in basic residues. The segment covering Asp2825–Phe2836 has biased composition (polar residues).

Belongs to the sodium channel (TC 1.A.1.10) family. NaCP60E subfamily. In terms of tissue distribution, in embryonic and larval stages, expression is limited to very few non-neuronal cells in either the CNS or PNS. In pupal and adult stages, expressed in cell bodies of the fly central nervous system, including optic lobes, central brain, subesophageal ganglion, thoracico-abdominal ganglion, major olfactory organs, the third antennal segment and the maxillary palps.

Its subcellular location is the cell membrane. Its function is as follows. Mediates the voltage-dependent sodium ion permeability of excitable membranes. Plays a role in processing of olfactory information during the olfactory avoidance response. The protein is Sodium channel protein 60E (NaCP60E) of Drosophila melanogaster (Fruit fly).